A 387-amino-acid chain; its full sequence is S-adenosylmethionine synthase (387 aa).

Residue His16 participates in ATP binding. Asp18 contacts Mg(2+). A K(+)-binding site is contributed by Glu44. Residues Glu57 and Gln100 each contribute to the L-methionine site. Positions 100 to 110 are flexible loop; sequence QSPDIAQGVDR. ATP-binding positions include 167–169, 232–233, Asp241, 247–248, Ala264, and Lys268; these read DAK, RF, and RK. Residue Asp241 participates in L-methionine binding. Residue Lys272 participates in L-methionine binding.

Belongs to the AdoMet synthase family. Homotetramer; dimer of dimers. Requires Mg(2+) as cofactor. The cofactor is K(+).

It is found in the cytoplasm. The catalysed reaction is L-methionine + ATP + H2O = S-adenosyl-L-methionine + phosphate + diphosphate. It participates in amino-acid biosynthesis; S-adenosyl-L-methionine biosynthesis; S-adenosyl-L-methionine from L-methionine: step 1/1. Its function is as follows. Catalyzes the formation of S-adenosylmethionine (AdoMet) from methionine and ATP. The overall synthetic reaction is composed of two sequential steps, AdoMet formation and the subsequent tripolyphosphate hydrolysis which occurs prior to release of AdoMet from the enzyme. This chain is S-adenosylmethionine synthase, found in Cupriavidus pinatubonensis (strain JMP 134 / LMG 1197) (Cupriavidus necator (strain JMP 134)).